Reading from the N-terminus, the 545-residue chain is MALRRGGCGALGLLLLLLGAACLIPRSAQVRRLARCPATCSCTKESIICVGSSWVPRIVPGDISSLSLVNGTFSEIKDRMFSHLPSLQLLLLNSNSFTIIRDDAFAGLFHLEYLFIEGNKIETISRNAFRGLRDLTHLSLANNHIKALPRDVFSDLDSLIELDLRGNKFECDCKAKWLYLWLKMTNSTVSDVLCIGPPEYQEKKLNDVTSFDYECTTTDFVVHQTLPYQSVSVDTFNSKNDVYVAIAQPSMENCMVLEWDHIEMNFRSYDNITGQSIVGCKAILIDDQVFVVVAQLFGGSHIYKYDESWTKFVKFQDIEVSRISKPNDIELFQIDDETFFVIADSSKAGLSTVYKWNSKGFYSYQSLHEWFRDTDAEFVDIDGKSHLILSSRSQVPIILQWNKSSKKFVPHGDIPNMEDVLAVKSFRMQNTLYLSLTRFIGDSRVMRWNSKQFVEIQALPSRGAMTLQPFSFKDNHYLALGSDYTFSQIYQWDKEKQLFKKFKEIYVQAPRSFTAVSTDRRDFFFASSFKGKTKIFEHIIVDLSL.

Positions 1-28 are cleaved as a signal peptide; that stretch reads MALRRGGCGALGLLLLLLGAACLIPRSA. The region spanning 29–65 is the LRRNT domain; it reads QVRRLARCPATCSCTKESIICVGSSWVPRIVPGDISS. Asparagine 70 carries an N-linked (GlcNAc...) asparagine glycan. 3 LRR repeats span residues 86–107, 110–131, and 134–155; these read SLQL…AFAG, HLEY…AFRG, and DLTH…VFSD. Residues 167 to 217 enclose the LRRCT domain; the sequence is NKFECDCKAKWLYLWLKMTNSTVSDVLCIGPPEYQEKKLNDVTSFDYECTT. A glycan (N-linked (GlcNAc...) asparagine) is linked at asparagine 186. 7 EAR repeats span residues 219-261, 265-307, 311-358, 360-403, 407-450, 452-494, and 498-540; these read DFVV…EWDH, NFRS…KYDE, KFVK…KWNS, GFYS…QWNK, KFVP…RWNS, QFVE…QWDK, and LFKK…EHII. A glycan (N-linked (GlcNAc...) asparagine) is linked at asparagine 271. An N-linked (GlcNAc...) asparagine glycan is attached at asparagine 402.

Brain, heart and placenta.

Its subcellular location is the secreted. Its function is as follows. Required for the development of soma-targeting inhibitory GABAergic synapses made by parvalbumin-positive basket cells. In Homo sapiens (Human), this protein is Leucine-rich repeat LGI family member 2 (LGI2).